A 495-amino-acid polypeptide reads, in one-letter code: 3-octaprenyl-4-hydroxybenzoate carboxy-lyase (495 aa).

Asn172 provides a ligand contact to Mn(2+). Residues 175-177, 189-191, and 194-195 contribute to the prenylated FMN site; these read IYR, RWL, and RG. Residue Glu238 participates in Mn(2+) binding. The active-site Proton donor is the Asp287.

The protein belongs to the UbiD family. Homohexamer. Requires prenylated FMN as cofactor. Mn(2+) serves as cofactor.

The protein localises to the cell membrane. The enzyme catalyses a 4-hydroxy-3-(all-trans-polyprenyl)benzoate + H(+) = a 2-(all-trans-polyprenyl)phenol + CO2. It participates in cofactor biosynthesis; ubiquinone biosynthesis. Catalyzes the decarboxylation of 3-octaprenyl-4-hydroxy benzoate to 2-octaprenylphenol, an intermediate step in ubiquinone biosynthesis. The protein is 3-octaprenyl-4-hydroxybenzoate carboxy-lyase of Marinobacter nauticus (strain ATCC 700491 / DSM 11845 / VT8) (Marinobacter aquaeolei).